The chain runs to 434 residues: Beta-enolase (434 aa).

N-acetylalanine is present on alanine 2. Threonine 72 carries the post-translational modification Phosphothreonine. Serine 83 and serine 157 each carry phosphoserine. Residues histidine 158 and glutamate 167 each contribute to the substrate site. Position 176 is a phosphoserine (serine 176). Phosphothreonine is present on threonine 205. The Proton donor role is filled by glutamate 210. Residue threonine 229 is modified to Phosphothreonine. Position 236 is a phosphotyrosine (tyrosine 236). A Mg(2+)-binding site is contributed by aspartate 245. Position 263 is a phosphoserine (serine 263). 2 residues coordinate substrate: glutamate 293 and aspartate 318. Positions 293 and 318 each coordinate Mg(2+). Residue lysine 343 is the Proton acceptor of the active site. Substrate-binding positions include 370–373 (SHRS) and lysine 394.

This sequence belongs to the enolase family. In terms of assembly, mammalian enolase is composed of 3 isozyme subunits, alpha, beta and gamma, which can form homodimers or heterodimers which are cell-type and development-specific. Interacts with PNKD. The cofactor is Mg(2+).

It is found in the cytoplasm. It carries out the reaction (2R)-2-phosphoglycerate = phosphoenolpyruvate + H2O. It participates in carbohydrate degradation; glycolysis; pyruvate from D-glyceraldehyde 3-phosphate: step 4/5. Glycolytic enzyme that catalyzes the conversion of 2-phosphoglycerate to phosphoenolpyruvate. Appears to have a function in striated muscle development and regeneration. This Bos taurus (Bovine) protein is Beta-enolase (ENO3).